A 338-amino-acid polypeptide reads, in one-letter code: DNA-directed RNA polymerase subunit alpha (338 aa).

Residues 1 to 230 form an alpha N-terminal domain (alpha-NTD) region; the sequence is MRKITTSAYM…QQMSVFKGIL (230 aa). The interval 247–338 is alpha C-terminal domain (alpha-CTD); that stretch reads FSKLLSSVED…ELKSQMSAKE (92 aa).

Belongs to the RNA polymerase alpha chain family. Homodimer. The RNAP catalytic core consists of 2 alpha, 1 beta, 1 beta' and 1 omega subunit. When a sigma factor is associated with the core the holoenzyme is formed, which can initiate transcription.

It catalyses the reaction RNA(n) + a ribonucleoside 5'-triphosphate = RNA(n+1) + diphosphate. In terms of biological role, DNA-dependent RNA polymerase catalyzes the transcription of DNA into RNA using the four ribonucleoside triphosphates as substrates. The polypeptide is DNA-directed RNA polymerase subunit alpha (Campylobacter concisus (strain 13826)).